A 1016-amino-acid polypeptide reads, in one-letter code: Rho family-interacting cell polarization regulator 2 (1016 aa).

A phosphoserine mark is found at Ser-21 and Ser-37. Positions 44–73 are disordered; the sequence is AVKKPQAKLKKMHNLGHKNSSPPKEPQPKR. Positions 48-59 are enriched in basic residues; that stretch reads PQAKLKKMHNLG. Residues 55 to 113 are involved in cell filopodia formation; the sequence is MHNLGHKNSSPPKEPQPKRVEEVYRALKNGLDEYLEVHQTELDKLTTQLKDMRRNSRLG. The stretch at 85–112 forms a coiled coil; that stretch reads LDEYLEVHQTELDKLTTQLKDMRRNSRL. Ser-341 carries the post-translational modification Phosphoserine. Over residues 414-428 the composition is skewed to polar residues; sequence TSTELPPGSQSSQNE. A disordered region spans residues 414 to 469; that stretch reads TSTELPPGSQSSQNEGLKDSSSASCSSSSREGSEPRPHPEGETQGLGKPEGCPVAT. Residues 433 to 442 show a composition bias toward low complexity; it reads SSSASCSSSS. Residues 444–454 are compositionally biased toward basic and acidic residues; that stretch reads EGSEPRPHPEG. A phosphoserine mark is found at Ser-520 and Ser-532. The disordered stretch occupies residues 636–656; that stretch reads DSVFSDTETEKNSYRSVHPEA. A compositionally biased stretch (basic and acidic residues) spans 643–656; the sequence is ETEKNSYRSVHPEA.

The protein belongs to the RIPOR family. In terms of assembly, homooligomer; homooligomerization is regulated by RHOC and leads to the formation of concatemers through the association of N- and C-termini. Interacts (phosphorylated form) with 14-3-3 proteins; these interactions occur during myogenic cell differentiation and also induces T cell proliferation arrest. Interacts (phosphorylated form) with HDAC6; this interaction occurs during early myogenic differentiation, prevents HDAC6 to deacetylate tubulin and also induces T cell proliferation arrest. Interacts with DYSF; this interaction occurs during early myogenic differentiation. Interacts with MYOF. Interacts (via active GTP- or inactive GDP-bound forms) with RHOA; this interaction is direct, blocks the loading of GTP to RHOA and decreases upon chemokine CCL19 stimulation in primary T lymphocytes. Interacts with RHOC. Interacts (via phosphorylated form) with YWHAB; this interaction occurs in a chemokine-dependent manner and does not compete for binding of RIPOR2 with RHOA nor blocks inhibition of RIPOR2-mediated RHOA activity. Interacts with YWHAE. Interacts with YWHAQ. Phosphorylated. Chemokine-induced phosphorylation in neutrophils occurs in a PKC- and AKT-dependent manner, resulting in RIPOR2 interaction with YWHAB and stabilization. Phosphorylated by PKCA, AKT1 and MAPKAPK1A; in vitro.

It is found in the cytoplasm. It localises to the cytoskeleton. The protein resides in the cell projection. The protein localises to the filopodium. Its subcellular location is the apical cell membrane. It is found in the stereocilium. It localises to the stereocilium membrane. Acts as an inhibitor of the small GTPase RHOA and plays several roles in the regulation of myoblast and hair cell differentiation, lymphocyte T proliferation and neutrophil polarization. Plays a role in fetal mononuclear myoblast differentiation by promoting filopodia and myotube formation. Maintains naive T lymphocytes in a quiescent state and prevents chemokine-induced T lymphocyte responses, such as cell adhesion, polarization and migration. Involved also in the regulation of neutrophil polarization, chemotaxis and adhesion. Required for normal development of inner and outer hair cell stereocilia within the cochlea of the inner ear. Plays a role for maintaining the structural organization of the basal domain of stereocilia. Involved in mechanosensory hair cell function. Required for normal hearing. The chain is Rho family-interacting cell polarization regulator 2 from Bos taurus (Bovine).